The chain runs to 731 residues: MDKLVVNYYEYKHPIINKDLAIGAHGGKKFPTLGAWYDVINEYEFQTRCPIILKNSHRNKHFTFACHLKNCPFKVLLSYAGNAASSETSSPSANNNTNPPGTPDHIHHHSNNMNNEDNDNNNGSNNKVSNDSKLDFVTDDLEYHLANTHPDDTNDKVESRSNEVNGNNDDDADANNIFKQQGVTIKNDTEDDSINKASIDRGLDDESGPTHGNDSGNHRHNEEDDVHTQMTKNYSDVVNDEDINVAIANAVANVDSQSNNKHDGKDDDATNNNDGQDNNTNNDHNNNSNINNNNVGSHGISSHSPSSIRDTSMNLDVFNSATDDIPGPFVVTKIEPYHSHPLEDNLSLGKFILTKIPKILQNDLKFDQILESSYNNSNHTVSKFKVSHYVEESGLLDILMQRYGLTAEDFEKRLLSQIARRITTYKARFVLKKKKMGEYNDLQPSSSSNNNNNNDGELSGTNLRSNSIDYAKHQEISSAGTSSNTTKNVNNNKNDSNDDNNGNNNNDASNLMESVLDKTSSHRYQPKKMPSVNKWSKPDQITHSDVSMVGLDESNDGGNENVHPTLAEVDAQEARETAQLAIDKINSYKRSIDDKNGDGHNNSSRNVVDENLINDMDSEDAHKSKRQHLSDITLEERNEDDKLPHEVAEQLRLLSSHLKEVENLHQNNDDDVDDVMVDVDVESQYNKNTTHHNNHHSQPHHDEEDVAGLIGKADDEEDLSDENIQPELRGQ.

Lys-18 participates in a covalent cross-link: Glycyl lysine isopeptide (Lys-Gly) (interchain with G-Cter in ubiquitin). 2 stretches are compositionally biased toward low complexity: residues 84-99 (ASSE…NTNP) and 111-129 (NNMN…NKVS). Disordered stretches follow at residues 84 to 132 (ASSE…SNDS), 146 to 227 (ANTH…DDVH), 251 to 308 (VANV…PSSI), and 439 to 463 (YNDL…GTNL). The segment covering 149-161 (HPDDTNDKVESRS) has biased composition (basic and acidic residues). Residues 177–186 (IFKQQGVTIK) are compositionally biased toward polar residues. Position 189 is a phosphothreonine (Thr-189). Ser-193 carries the post-translational modification Phosphoserine. 2 stretches are compositionally biased toward low complexity: residues 270 to 308 (TNNN…PSSI) and 445 to 454 (SSSSNNNNNN). Ser-467 carries the post-translational modification Phosphoserine. The disordered stretch occupies residues 475–539 (EISSAGTSSN…PSVNKWSKPD (65 aa)). The span at 481–510 (TSSNTTKNVNNNKNDSNDDNNGNNNNDASN) shows a compositional bias: low complexity. Phosphoserine is present on residues Ser-554 and Ser-618. Disordered regions lie at residues 590–643 (RSID…DDKL) and 687–731 (KNTT…LRGQ). Ser-624 bears the Phosphoserine; by PKC mark. C-terminal sequence regions lie at residues 624-628 (SKRQH) and 639-662 (EDDK…KEVE). Over residues 634-643 (LEERNEDDKL) the composition is skewed to basic and acidic residues. Over residues 689 to 698 (TTHHNNHHSQ) the composition is skewed to basic residues. Ser-720 bears the Phosphoserine; by CK2 mark.

The protein belongs to the BAF1 family. Component of the global genome repair (GGR) complex composed of at least ABF1, RAD7 and RAD16. Interacts with PSE1. Extensively phosphorylated on Ser and Thr residues.

Its subcellular location is the nucleus. Its function is as follows. General regulatory factor (GRF) that contributes to transcriptional activation of a large number of genes, as well as to DNA replication, silencing and telomere structure. Involved in the transcription activation of a subset of ribosomal protein genes. Binds the ARS-elements found in many promoters. Binds to the sequence 5'-TCN(7)ACG-3'. Influences on genome-wide nucleosome occupancy and affects chromatin structure, and probably dynamics. As a component of the global genome repair (GGR) complex, promotes global genome nucleotide excision repair (GG-NER) which removes DNA damage from nontranscribing DNA. Component of the regulatory network controlling mitotic and meiotic cell cycle progression. This is ARS-binding factor 1 (ABF1) from Saccharomyces cerevisiae (strain ATCC 204508 / S288c) (Baker's yeast).